An 85-amino-acid chain; its full sequence is RNA-binding protein Hfq (85 aa).

Positions 10–69 (DPFLNILRKEHVPVSIYLVNGIKLQGQIESFDQYVVLLKNTVTQMVYKHAISTVVPARPV) constitute a Sm domain.

It belongs to the Hfq family. Homohexamer.

RNA chaperone that binds small regulatory RNA (sRNAs) and mRNAs to facilitate mRNA translational regulation in response to envelope stress, environmental stress and changes in metabolite concentrations. Also binds with high specificity to tRNAs. The protein is RNA-binding protein Hfq of Laribacter hongkongensis (strain HLHK9).